The chain runs to 96 residues: Secreted RxLR effector protein 123 (96 aa).

The signal sequence occupies residues 1–22 (MVGAYYVGIALLVAGGSQTAAG). Positions 49–70 (RFLRKSRNPKDNLMLSEANEER) match the RxLR-dEER motif. Positions 57 to 96 (PKDNLMLSEANEERTPSSPSNSLTEFIVSEPITTNVMRTE) are disordered. The segment covering 87-96 (PITTNVMRTE) has biased composition (polar residues).

Belongs to the RxLR effector family.

The protein resides in the secreted. Its subcellular location is the host nucleus. The protein localises to the host cytoplasm. Its function is as follows. Secreted effector that dos not suppress the host cell death induced by cell death-inducing proteins. This is Secreted RxLR effector protein 123 from Plasmopara viticola (Downy mildew of grapevine).